The following is a 265-amino-acid chain: Methyl-coenzyme M reductase II subunit gamma (265 aa).

Residue Arg-123 coordinates coenzyme M.

This sequence belongs to the methyl-coenzyme M reductase gamma subunit family. As to quaternary structure, MCR is a hexamer of two alpha, two beta, and two gamma chains, forming a dimer of heterotrimers. Coenzyme F430 is required as a cofactor.

The enzyme catalyses coenzyme B + methyl-coenzyme M = methane + coenzyme M-coenzyme B heterodisulfide. Its pathway is one-carbon metabolism; methyl-coenzyme M reduction; methane from methyl-coenzyme M: step 1/1. In terms of biological role, component of the methyl-coenzyme M reductase (MCR) I that catalyzes the reductive cleavage of methyl-coenzyme M (CoM-S-CH3 or 2-(methylthio)ethanesulfonate) using coenzyme B (CoB or 7-mercaptoheptanoylthreonine phosphate) as reductant which results in the production of methane and the mixed heterodisulfide of CoB and CoM (CoM-S-S-CoB). This is the final step in methanogenesis. The protein is Methyl-coenzyme M reductase II subunit gamma (mrtG) of Methanothermobacter marburgensis (strain ATCC BAA-927 / DSM 2133 / JCM 14651 / NBRC 100331 / OCM 82 / Marburg) (Methanobacterium thermoautotrophicum).